A 94-amino-acid polypeptide reads, in one-letter code: Large ribosomal subunit protein bL25 (94 aa).

Belongs to the bacterial ribosomal protein bL25 family. Part of the 50S ribosomal subunit; part of the 5S rRNA/L5/L18/L25 subcomplex. Contacts the 5S rRNA. Binds to the 5S rRNA independently of L5 and L18.

In terms of biological role, this is one of the proteins that binds to the 5S RNA in the ribosome where it forms part of the central protuberance. This chain is Large ribosomal subunit protein bL25, found in Proteus mirabilis (strain HI4320).